The chain runs to 201 residues: Ras-related protein Rab-1B (201 aa).

M1 bears the N-acetylmethionine mark. GTP is bound by residues S17, G18, V19, G20, K21, S22, C23, Y33, T34, E35, S36, S39, and T40. Residue S22 participates in Mg(2+) binding. Positions 30–45 (DDTYTESYISTIGVDF) match the Switch 1 motif. T40 and D63 together coordinate Mg(2+). A switch 2 region; required for interaction with REP1/CHM region spans residues 64 to 83 (TAGQERFRTITSSYYRGAHG). Residues 65-80 (AGQERFRTITSSYYRG) carry the Switch 2 motif. GTP contacts are provided by G66, N121, K122, D124, S151, A152, and K153. The segment at 174-201 (GPGAASGGERPNLKIDSTPVKPASGGCC) is disordered. S-geranylgeranyl cysteine attachment occurs at residues C200 and C201. A Cysteine methyl ester modification is found at C201.

It belongs to the small GTPase superfamily. Rab family. In terms of assembly, interacts with MICAL1 and MICAL2. Interacts (GTP-bound form) with MICALCL, MICAL1 and MILCAL3. Interacts with GDI1; the interaction requires the GDP-bound state. Interacts with CHM/REP1; the interaction requires the GDP-bound form and is necessary for prenylation by GGTase II. Interacts with RabGAP TBC1D20. Interacts (in GDP-bound form) with lipid phosphatase MTMR6 (via GRAM domain); the interaction regulates MTMR6 recruitment to the endoplasmic reticulum-Golgi intermediate compartment. Interacts (in GDP-bound form) with lipid phosphatase MTMR7. Mg(2+) serves as cofactor. Post-translationally, prenylated; by GGTase II, only after interaction of the substrate with Rab escort protein 1 (REP1).

The protein localises to the cytoplasm. The protein resides in the membrane. It is found in the preautophagosomal structure membrane. Its subcellular location is the perinuclear region. The catalysed reaction is GTP + H2O = GDP + phosphate + H(+). Its activity is regulated as follows. Regulated by guanine nucleotide exchange factors (GEFs) which promote the exchange of bound GDP for free GTP. Regulated by GTPase activating proteins (GAPs) including TBC1D20 which increases the GTP hydrolysis activity. Inhibited by GDP dissociation inhibitors (GDIs). Functionally, the small GTPases Rab are key regulators of intracellular membrane trafficking, from the formation of transport vesicles to their fusion with membranes. Rabs cycle between an inactive GDP-bound form and an active GTP-bound form that is able to recruit to membranes different set of downstream effectors directly responsible for vesicle formation, movement, tethering and fusion. Plays a role in the initial events of the autophagic vacuole development which take place at specialized regions of the endoplasmic reticulum. Regulates vesicular transport between the endoplasmic reticulum and successive Golgi compartments. Required to modulate the compacted morphology of the Golgi. Promotes the recruitment of lipid phosphatase MTMR6 to the endoplasmic reticulum-Golgi intermediate compartment. The sequence is that of Ras-related protein Rab-1B (Rab1b) from Mus musculus (Mouse).